We begin with the raw amino-acid sequence, 205 residues long: Large ribosomal subunit protein bL25 (205 aa).

The protein belongs to the bacterial ribosomal protein bL25 family. CTC subfamily. As to quaternary structure, part of the 50S ribosomal subunit; part of the 5S rRNA/L5/L18/L25 subcomplex. Contacts the 5S rRNA. Binds to the 5S rRNA independently of L5 and L18.

This is one of the proteins that binds to the 5S RNA in the ribosome where it forms part of the central protuberance. The protein is Large ribosomal subunit protein bL25 of Stutzerimonas stutzeri (strain A1501) (Pseudomonas stutzeri).